Here is a 361-residue protein sequence, read N- to C-terminus: Protein YIM1-2 (361 aa).

The protein belongs to the YIM1 family.

Its subcellular location is the lipid droplet. The protein localises to the mitochondrion. This chain is Protein YIM1-2 (YIM1-2), found in Lachancea thermotolerans (strain ATCC 56472 / CBS 6340 / NRRL Y-8284) (Yeast).